The following is a 385-amino-acid chain: Probable dual-specificity RNA methyltransferase RlmN (385 aa).

The interval 1 to 35 is disordered; sequence MNVKEPAEEAAIQLRTERQRIEPEGEEQSEQPTDL. The active-site Proton acceptor is Glu121. The region spanning 132–367 is the Radical SAM core domain; sequence TRDRVTVCLS…AVIREERGQD (236 aa). Cys139 and Cys372 are disulfide-bonded. Residues Cys146, Cys150, and Cys153 each coordinate [4Fe-4S] cluster. Residues 198–199, Ser230, 253–255, and Asn329 contribute to the S-adenosyl-L-methionine site; these read GE and SLH. Cys372 functions as the S-methylcysteine intermediate in the catalytic mechanism.

Belongs to the radical SAM superfamily. RlmN family. [4Fe-4S] cluster serves as cofactor.

The protein resides in the cytoplasm. It catalyses the reaction adenosine(2503) in 23S rRNA + 2 reduced [2Fe-2S]-[ferredoxin] + 2 S-adenosyl-L-methionine = 2-methyladenosine(2503) in 23S rRNA + 5'-deoxyadenosine + L-methionine + 2 oxidized [2Fe-2S]-[ferredoxin] + S-adenosyl-L-homocysteine. It carries out the reaction adenosine(37) in tRNA + 2 reduced [2Fe-2S]-[ferredoxin] + 2 S-adenosyl-L-methionine = 2-methyladenosine(37) in tRNA + 5'-deoxyadenosine + L-methionine + 2 oxidized [2Fe-2S]-[ferredoxin] + S-adenosyl-L-homocysteine. Functionally, specifically methylates position 2 of adenine 2503 in 23S rRNA and position 2 of adenine 37 in tRNAs. The polypeptide is Probable dual-specificity RNA methyltransferase RlmN (Heliobacterium modesticaldum (strain ATCC 51547 / Ice1)).